Reading from the N-terminus, the 415-residue chain is Phosphoglycerate kinase (415 aa).

Residues Asp27–Asn29, Arg44, His67–Arg70, Arg124, and Arg164 contribute to the substrate site. Residues Glu336 and Gly362–Met365 contribute to the ATP site.

It belongs to the phosphoglycerate kinase family. As to quaternary structure, monomer.

Its subcellular location is the cytoplasm. It catalyses the reaction (2R)-3-phosphoglycerate + ATP = (2R)-3-phospho-glyceroyl phosphate + ADP. The protein operates within carbohydrate degradation; glycolysis; pyruvate from D-glyceraldehyde 3-phosphate: step 2/5. In Sulfolobus acidocaldarius (strain ATCC 33909 / DSM 639 / JCM 8929 / NBRC 15157 / NCIMB 11770), this protein is Phosphoglycerate kinase.